Reading from the N-terminus, the 60-residue chain is Large ribosomal subunit protein bL32 (60 aa).

Positions Met-1–His-23 are enriched in basic residues. The interval Met-1–Val-26 is disordered.

It belongs to the bacterial ribosomal protein bL32 family.

The sequence is that of Large ribosomal subunit protein bL32 from Deinococcus geothermalis (strain DSM 11300 / CIP 105573 / AG-3a).